The sequence spans 161 residues: Bacterioferritin (161 aa).

In terms of domain architecture, Ferritin-like diiron spans 1–145; the sequence is MKGEPKVIER…TQLDLLAKIG (145 aa). Fe cation-binding residues include Glu-18 and Glu-51. Met-52 is a binding site for heme b. Fe cation is bound by residues His-54, Glu-94, Glu-127, and His-130.

It belongs to the bacterioferritin family. In terms of assembly, homooligomer of 24 subunits, arranged as 12 dimers, that are packed together to form an approximately spherical molecule with a central cavity, in which large amounts of iron can be deposited. Heme b is required as a cofactor.

The enzyme catalyses 4 Fe(2+) + O2 + 4 H(+) = 4 Fe(3+) + 2 H2O. It catalyses the reaction Fe(2+)(in) = Fe(2+)(out). Functionally, iron-storage protein, whose ferroxidase center binds Fe(2+), oxidizes it using dioxygen to Fe(3+), and participates in the subsequent Fe(3+) oxide mineral core formation within the central cavity of the BFR protein shell. The chain is Bacterioferritin (bfr) from Brucella melitensis biotype 1 (strain ATCC 23456 / CCUG 17765 / NCTC 10094 / 16M).